The primary structure comprises 597 residues: Elongation factor 4 (597 aa).

The tr-type G domain occupies 2–184; that stretch reads DHIRNFSIIA…ALIAKVPPPK (183 aa). GTP contacts are provided by residues 14 to 19 and 131 to 134; these read DHGKST and NKID.

It belongs to the TRAFAC class translation factor GTPase superfamily. Classic translation factor GTPase family. LepA subfamily.

The protein localises to the cell inner membrane. It catalyses the reaction GTP + H2O = GDP + phosphate + H(+). Its function is as follows. Required for accurate and efficient protein synthesis under certain stress conditions. May act as a fidelity factor of the translation reaction, by catalyzing a one-codon backward translocation of tRNAs on improperly translocated ribosomes. Back-translocation proceeds from a post-translocation (POST) complex to a pre-translocation (PRE) complex, thus giving elongation factor G a second chance to translocate the tRNAs correctly. Binds to ribosomes in a GTP-dependent manner. The polypeptide is Elongation factor 4 (Paraburkholderia phymatum (strain DSM 17167 / CIP 108236 / LMG 21445 / STM815) (Burkholderia phymatum)).